We begin with the raw amino-acid sequence, 196 residues long: Molybdenum cofactor guanylyltransferase (196 aa).

GTP-binding positions include 10–12 (LAG), Lys23, Asn51, Asp69, and Asp99. Mg(2+) is bound at residue Asp99.

The protein belongs to the MobA family. As to quaternary structure, monomer. The cofactor is Mg(2+).

It is found in the cytoplasm. It carries out the reaction Mo-molybdopterin + GTP + H(+) = Mo-molybdopterin guanine dinucleotide + diphosphate. Transfers a GMP moiety from GTP to Mo-molybdopterin (Mo-MPT) cofactor (Moco or molybdenum cofactor) to form Mo-molybdopterin guanine dinucleotide (Mo-MGD) cofactor. The polypeptide is Molybdenum cofactor guanylyltransferase (Shewanella sp. (strain W3-18-1)).